A 348-amino-acid chain; its full sequence is Phosphate acyltransferase (348 aa).

This sequence belongs to the PlsX family. In terms of assembly, homodimer. Probably interacts with PlsY.

The protein localises to the cytoplasm. The enzyme catalyses a fatty acyl-[ACP] + phosphate = an acyl phosphate + holo-[ACP]. It participates in lipid metabolism; phospholipid metabolism. Functionally, catalyzes the reversible formation of acyl-phosphate (acyl-PO(4)) from acyl-[acyl-carrier-protein] (acyl-ACP). This enzyme utilizes acyl-ACP as fatty acyl donor, but not acyl-CoA. This Rhizobium etli (strain ATCC 51251 / DSM 11541 / JCM 21823 / NBRC 15573 / CFN 42) protein is Phosphate acyltransferase.